The primary structure comprises 220 residues: Probable nicotinate-nucleotide adenylyltransferase (220 aa).

This sequence belongs to the NadD family.

It catalyses the reaction nicotinate beta-D-ribonucleotide + ATP + H(+) = deamido-NAD(+) + diphosphate. It participates in cofactor biosynthesis; NAD(+) biosynthesis; deamido-NAD(+) from nicotinate D-ribonucleotide: step 1/1. Its function is as follows. Catalyzes the reversible adenylation of nicotinate mononucleotide (NaMN) to nicotinic acid adenine dinucleotide (NaAD). This is Probable nicotinate-nucleotide adenylyltransferase from Yersinia enterocolitica serotype O:8 / biotype 1B (strain NCTC 13174 / 8081).